A 378-amino-acid chain; its full sequence is uncharacterized protein (378 aa).

Basic residues predominate over residues 1–11 (MSPMNRQRKNK). The disordered stretch occupies residues 1–23 (MSPMNRQRKNKSNVLNEKDERPG).

This is an uncharacterized protein from Caenorhabditis elegans.